We begin with the raw amino-acid sequence, 907 residues long: Probable dipeptidyl-aminopeptidase B (907 aa).

The segment covering 1–26 has biased composition (basic and acidic residues); sequence MPRQRAPKEEEAELLTKQERSTRSSE. The tract at residues 1-70 is disordered; sequence MPRQRAPKEE…EKYTDEDDEA (70 aa). The Cytoplasmic portion of the chain corresponds to 1 to 93; that stretch reads MPRQRAPKEE…PVAVDKKTRR (93 aa). The segment covering 30–44 has biased composition (low complexity); that stretch reads DASVSSISTTSLVLE. The helical; Signal-anchor for type II membrane protein transmembrane segment at 94–114 threads the bilayer; the sequence is WLWIVGIACVTGWALALVFFL. Residues 115-907 lie on the Vacuolar side of the membrane; sequence MSGSYKHVST…SQVDARLERR (793 aa). The N-linked (GlcNAc...) asparagine glycan is linked to asparagine 560. Serine 751 (charge relay system) is an active-site residue. The N-linked (GlcNAc...) asparagine glycan is linked to asparagine 805. Catalysis depends on charge relay system residues aspartate 828 and histidine 861.

It belongs to the peptidase S9B family.

Its subcellular location is the vacuole membrane. It catalyses the reaction Release of an N-terminal dipeptide, Xaa-Yaa-|-Zaa-, from a polypeptide, preferentially when Yaa is Pro, provided Zaa is neither Pro nor hydroxyproline.. In terms of biological role, type IV dipeptidyl-peptidase which removes N-terminal dipeptides sequentially from polypeptides having unsubstituted N-termini provided that the penultimate residue is proline. In Pyrenophora teres f. teres (strain 0-1) (Barley net blotch fungus), this protein is Probable dipeptidyl-aminopeptidase B (dapB).